The sequence spans 181 residues: Kappa-casein (181 aa).

Residues 1–21 form the signal peptide; the sequence is MMRNFIVVVNILALTLPFLAA. Threonine 123 is subject to Phosphothreonine. 3 O-linked (GalNAc...) threonine glycosylation sites follow: threonine 134, threonine 144, and threonine 155. Serine 162 carries the post-translational modification Phosphoserine; alternate. Residue serine 162 is glycosylated (O-linked (GalNAc...) serine; alternate). Serine 178 carries the phosphoserine modification.

Belongs to the kappa-casein family. As to expression, mammary gland specific. Secreted in milk.

The protein resides in the secreted. Functionally, kappa-casein stabilizes micelle formation, preventing casein precipitation in milk. The sequence is that of Kappa-casein (Csn3) from Mus musculus (Mouse).